Reading from the N-terminus, the 347-residue chain is Hydroxymethylglutaryl-CoA synthase (347 aa).

Positions 29 and 30 each coordinate (3S)-3-hydroxy-3-methylglutaryl-CoA. Glu80 serves as the catalytic Proton donor/acceptor. Residues Cys112 and Thr153 each coordinate (3S)-3-hydroxy-3-methylglutaryl-CoA. Cys112 (acyl-thioester intermediate) is an active-site residue. A CoA-binding site is contributed by Arg199. Thr201 and His234 together coordinate (3S)-3-hydroxy-3-methylglutaryl-CoA. Residue His234 is the Proton donor/acceptor of the active site. Lys239 is a CoA binding site. Residues Arg243, Asn266, and Ser296 each coordinate (3S)-3-hydroxy-3-methylglutaryl-CoA.

This sequence belongs to the thiolase-like superfamily. Archaeal HMG-CoA synthase family. In terms of assembly, interacts with acetoacetyl-CoA thiolase that catalyzes the precedent step in the pathway and with a DUF35 protein. The acetoacetyl-CoA thiolase/HMG-CoA synthase complex channels the intermediate via a fused CoA-binding site, which allows for efficient coupling of the endergonic thiolase reaction with the exergonic HMGCS reaction.

The enzyme catalyses acetoacetyl-CoA + acetyl-CoA + H2O = (3S)-3-hydroxy-3-methylglutaryl-CoA + CoA + H(+). The protein operates within metabolic intermediate biosynthesis; (R)-mevalonate biosynthesis; (R)-mevalonate from acetyl-CoA: step 2/3. Functionally, catalyzes the condensation of acetyl-CoA with acetoacetyl-CoA to form 3-hydroxy-3-methylglutaryl-CoA (HMG-CoA). Functions in the mevalonate (MVA) pathway leading to isopentenyl diphosphate (IPP), a key precursor for the biosynthesis of isoprenoid compounds that are building blocks of archaeal membrane lipids. This chain is Hydroxymethylglutaryl-CoA synthase, found in Methanocella arvoryzae (strain DSM 22066 / NBRC 105507 / MRE50).